Reading from the N-terminus, the 325-residue chain is Large ribosomal subunit protein uL1m (325 aa).

The transit peptide at M1 to A50 directs the protein to the mitochondrion.

Belongs to the universal ribosomal protein uL1 family. Component of the mitochondrial large ribosomal subunit (mt-LSU). Mature mammalian 55S mitochondrial ribosomes consist of a small (28S) and a large (39S) subunit. The 28S small subunit contains a 12S ribosomal RNA (12S mt-rRNA) and 30 different proteins. The 39S large subunit contains a 16S rRNA (16S mt-rRNA), a copy of mitochondrial valine transfer RNA (mt-tRNA(Val)), which plays an integral structural role, and 52 different proteins.

Its subcellular location is the mitochondrion. The chain is Large ribosomal subunit protein uL1m (MRPL1) from Homo sapiens (Human).